Consider the following 704-residue polypeptide: Elongation factor G (704 aa).

Residues 8–291 (DKVRNIGIMA…AVVDYLASPL (284 aa)) enclose the tr-type G domain. GTP is bound by residues 17 to 24 (AHIDAGKT), 90 to 94 (DTPGH), and 144 to 147 (NKMD).

Belongs to the TRAFAC class translation factor GTPase superfamily. Classic translation factor GTPase family. EF-G/EF-2 subfamily.

Its subcellular location is the cytoplasm. Functionally, catalyzes the GTP-dependent ribosomal translocation step during translation elongation. During this step, the ribosome changes from the pre-translocational (PRE) to the post-translocational (POST) state as the newly formed A-site-bound peptidyl-tRNA and P-site-bound deacylated tRNA move to the P and E sites, respectively. Catalyzes the coordinated movement of the two tRNA molecules, the mRNA and conformational changes in the ribosome. In Chlorobium luteolum (strain DSM 273 / BCRC 81028 / 2530) (Pelodictyon luteolum), this protein is Elongation factor G.